The chain runs to 105 residues: Large ribosomal subunit protein uL24 (105 aa).

Belongs to the universal ribosomal protein uL24 family. As to quaternary structure, part of the 50S ribosomal subunit.

In terms of biological role, one of two assembly initiator proteins, it binds directly to the 5'-end of the 23S rRNA, where it nucleates assembly of the 50S subunit. Functionally, one of the proteins that surrounds the polypeptide exit tunnel on the outside of the subunit. The chain is Large ribosomal subunit protein uL24 from Mycobacterium sp. (strain JLS).